The chain runs to 511 residues: Bifunctional purine biosynthesis protein PurH (511 aa).

In terms of domain architecture, MGS-like spans 1–145; that stretch reads MKKRALVSVS…KNHKFVSVIV (145 aa).

This sequence belongs to the PurH family.

It carries out the reaction (6R)-10-formyltetrahydrofolate + 5-amino-1-(5-phospho-beta-D-ribosyl)imidazole-4-carboxamide = 5-formamido-1-(5-phospho-D-ribosyl)imidazole-4-carboxamide + (6S)-5,6,7,8-tetrahydrofolate. It catalyses the reaction IMP + H2O = 5-formamido-1-(5-phospho-D-ribosyl)imidazole-4-carboxamide. The protein operates within purine metabolism; IMP biosynthesis via de novo pathway; 5-formamido-1-(5-phospho-D-ribosyl)imidazole-4-carboxamide from 5-amino-1-(5-phospho-D-ribosyl)imidazole-4-carboxamide (10-formyl THF route): step 1/1. Its pathway is purine metabolism; IMP biosynthesis via de novo pathway; IMP from 5-formamido-1-(5-phospho-D-ribosyl)imidazole-4-carboxamide: step 1/1. This chain is Bifunctional purine biosynthesis protein PurH, found in Bacillus cereus (strain ATCC 14579 / DSM 31 / CCUG 7414 / JCM 2152 / NBRC 15305 / NCIMB 9373 / NCTC 2599 / NRRL B-3711).